Consider the following 125-residue polypeptide: Mite group 2 allergen Gly d 2.02 (125 aa).

It belongs to the NPC2 family.

It is found in the secreted. This is Mite group 2 allergen Gly d 2.02 from Glycyphagus domesticus (House itch mite).